The following is a 180-amino-acid chain: Large ribosomal subunit protein bL17 (180 aa).

The interval 134–180 is disordered; sequence AQAKAKKAAAMPTEESEAKPAEEGDVVGASEPDAKAPEEPPTEAPEN.

Belongs to the bacterial ribosomal protein bL17 family. In terms of assembly, part of the 50S ribosomal subunit. Contacts protein L32.

This chain is Large ribosomal subunit protein bL17, found in Mycobacterium tuberculosis (strain CDC 1551 / Oshkosh).